Reading from the N-terminus, the 930-residue chain is Zn(2)-C6 fungal-type transcription factor FTF1c (930 aa).

The segment at residues 137 to 164 is a DNA-binding region (zn(2)-C6 fungal-type); the sequence is CIACRRKKIRCSGEKPACEHCLCSYIPC.

The protein resides in the nucleus. Zn(2)-C6 fungal-type transcription factor that has a role in the establishment of the fungus within the plant and/or the progress of the disease. Regulates the expression of virulence factors such as SIX1 and SIX6. In Fusarium oxysporum f. sp. lycopersici (strain 4287 / CBS 123668 / FGSC 9935 / NRRL 34936) (Fusarium vascular wilt of tomato), this protein is Zn(2)-C6 fungal-type transcription factor FTF1c.